Reading from the N-terminus, the 110-residue chain is Integration host factor subunit alpha (110 aa).

The protein belongs to the bacterial histone-like protein family. As to quaternary structure, heterodimer of an alpha and a beta chain.

In terms of biological role, this protein is one of the two subunits of integration host factor, a specific DNA-binding protein that functions in genetic recombination as well as in transcriptional and translational control. The protein is Integration host factor subunit alpha of Delftia acidovorans (strain DSM 14801 / SPH-1).